The following is a 931-amino-acid chain: Protocadherin gamma-B2 (931 aa).

The signal sequence occupies residues 1–30 (MKASSGRCGLVRWLQVLLPFLLSLFPGALP). Cadherin domains are found at residues 31–133 (VQIR…TPLF), 134–242 (KQTK…PPVF), 243–347 (SQDV…APEV), 348–452 (IVTS…APVF), 453–562 (QQTS…APRV), and 570–675 (DGSA…LPDL). The Extracellular portion of the chain corresponds to 31–691 (VQIRYSIPEE…SDPQAKLQFY (661 aa)). N419 and N545 each carry an N-linked (GlcNAc...) asparagine glycan. The chain crosses the membrane as a helical span at residues 692-712 (LVVALALISVLFFLAVILAIS). Over 713-931 (LRLRLSSRSD…KKKSGKKEKK (219 aa)) the chain is Cytoplasmic. Disordered stretches follow at residues 814–840 (DWRF…WPNN) and 901–931 (ATLT…KEKK). The segment covering 815-840 (WRFSQAQRPGTSGSQNGDDTGTWPNN) has biased composition (polar residues). Positions 921-931 (NKKKSGKKEKK) are enriched in basic residues.

It localises to the cell membrane. In terms of biological role, potential calcium-dependent cell-adhesion protein. May be involved in the establishment and maintenance of specific neuronal connections in the brain. The sequence is that of Protocadherin gamma-B2 (PCDHGB2) from Homo sapiens (Human).